The following is a 134-amino-acid chain: Small ribosomal subunit protein uS8c (134 aa).

This sequence belongs to the universal ribosomal protein uS8 family. Part of the 30S ribosomal subunit.

It localises to the plastid. It is found in the chloroplast. Functionally, one of the primary rRNA binding proteins, it binds directly to 16S rRNA central domain where it helps coordinate assembly of the platform of the 30S subunit. This chain is Small ribosomal subunit protein uS8c (rps8), found in Phaseolus angularis (Azuki bean).